The sequence spans 201 residues: uncharacterized protein (201 aa).

Positions 1 to 19 (MKLIVSVFLIGCQFLNILG) are cleaved as a signal peptide.

This is an uncharacterized protein from Acheta domesticus (House cricket).